A 455-amino-acid polypeptide reads, in one-letter code: Chromosomal replication initiator protein DnaA (455 aa).

The interval 1-75 (MDTNNNIEKE…EILSQNKVGM (75 aa)) is domain I, interacts with DnaA modulators. Residues 75–106 (MHLAHSVDVRIEVAPKIQISTQSNINYKATKM) are domain II. Residues 107–321 (SVKDSYTFEN…GAIIKISVNA (215 aa)) form a domain III, AAA+ region region. Residues G151, G153, K154, and T155 each contribute to the ATP site. The segment at 322 to 455 (NLMNASIDLN…DKKTAFNSSE (134 aa)) is domain IV, binds dsDNA.

This sequence belongs to the DnaA family. In terms of assembly, oligomerizes as a right-handed, spiral filament on DNA at oriC.

It is found in the cytoplasm. Plays an essential role in the initiation and regulation of chromosomal replication. ATP-DnaA binds to the origin of replication (oriC) to initiate formation of the DNA replication initiation complex once per cell cycle. Binds the DnaA box (a 9 base pair repeat at the origin) and separates the double-stranded (ds)DNA. Forms a right-handed helical filament on oriC DNA; dsDNA binds to the exterior of the filament while single-stranded (ss)DNA is stabiized in the filament's interior. The ATP-DnaA-oriC complex binds and stabilizes one strand of the AT-rich DNA unwinding element (DUE), permitting loading of DNA polymerase. After initiation quickly degrades to an ADP-DnaA complex that is not apt for DNA replication. Binds acidic phospholipids. The sequence is that of Chromosomal replication initiator protein DnaA from Helicobacter pylori (strain HPAG1).